The following is a 470-amino-acid chain: BTB/POZ domain-containing protein 17 (470 aa).

The N-terminal stretch at Met1–Ser18 is a signal peptide. Residues Ser53–Leu122 enclose the BTB domain. The BACK domain maps to Val161 to Gln261.

It localises to the secreted. The chain is BTB/POZ domain-containing protein 17 (btbd17) from Xenopus laevis (African clawed frog).